Reading from the N-terminus, the 186-residue chain is Peptidyl-tRNA hydrolase (186 aa).

Position 14 (Y14) interacts with tRNA. Catalysis depends on H19, which acts as the Proton acceptor. Y64, N66, and N112 together coordinate tRNA.

This sequence belongs to the PTH family. As to quaternary structure, monomer.

The protein localises to the cytoplasm. It catalyses the reaction an N-acyl-L-alpha-aminoacyl-tRNA + H2O = an N-acyl-L-amino acid + a tRNA + H(+). Functionally, hydrolyzes ribosome-free peptidyl-tRNAs (with 1 or more amino acids incorporated), which drop off the ribosome during protein synthesis, or as a result of ribosome stalling. Catalyzes the release of premature peptidyl moieties from peptidyl-tRNA molecules trapped in stalled 50S ribosomal subunits, and thus maintains levels of free tRNAs and 50S ribosomes. The sequence is that of Peptidyl-tRNA hydrolase from Bacillus cereus (strain Q1).